Here is a 508-residue protein sequence, read N- to C-terminus: Lysine--tRNA ligase (508 aa).

Glu418 and Glu425 together coordinate Mg(2+).

Belongs to the class-II aminoacyl-tRNA synthetase family. In terms of assembly, homodimer. Mg(2+) serves as cofactor.

The protein localises to the cytoplasm. The enzyme catalyses tRNA(Lys) + L-lysine + ATP = L-lysyl-tRNA(Lys) + AMP + diphosphate. In Burkholderia mallei (strain NCTC 10247), this protein is Lysine--tRNA ligase.